The chain runs to 153 residues: Flagellar assembly factor FliW (153 aa).

It belongs to the FliW family. In terms of assembly, interacts with translational regulator CsrA and flagellin(s).

The protein resides in the cytoplasm. Its function is as follows. Acts as an anti-CsrA protein, binds CsrA and prevents it from repressing translation of its target genes, one of which is flagellin. Binds to flagellin and participates in the assembly of the flagellum. In Leptospira biflexa serovar Patoc (strain Patoc 1 / Ames), this protein is Flagellar assembly factor FliW.